The sequence spans 509 residues: Putative (R)-citramalate synthase CimA (509 aa).

The Pyruvate carboxyltransferase domain occupies 14–267; sequence VRIFDTTLRD…DTGIRTERLT (254 aa).

The protein belongs to the alpha-IPM synthase/homocitrate synthase family. In terms of assembly, homodimer.

The catalysed reaction is pyruvate + acetyl-CoA + H2O = (3R)-citramalate + CoA + H(+). It functions in the pathway amino-acid biosynthesis; L-isoleucine biosynthesis; 2-oxobutanoate from pyruvate: step 1/3. Its function is as follows. Catalyzes the condensation of pyruvate and acetyl-coenzyme A to form (R)-citramalate. This Methanopyrus kandleri (strain AV19 / DSM 6324 / JCM 9639 / NBRC 100938) protein is Putative (R)-citramalate synthase CimA (cimA).